We begin with the raw amino-acid sequence, 271 residues long: Aquaporin-1 (271 aa).

Over 1–11 (MASEFKKKIFW) the chain is Cytoplasmic. The chain crosses the membrane as a helical span at residues 12–29 (RAVVAEFLAMTLFIFISI). At 30 to 48 (GSALGFQYPVRNNQTSGAA) the chain is on the extracellular side. An N-linked (GlcNAc...) asparagine glycan is attached at N42. A helical transmembrane segment spans residues 49–67 (QDNVKVSLAFGLSIATLAQ). Residues 68 to 70 (SVG) are Cytoplasmic-facing. The stretch at 71 to 84 (HISGAHLNPAVTLG) is an intramembrane region. The short motif at 78-80 (NPA) is the NPA 1 element. At 85-92 (LLLSCQIS) the chain is on the cytoplasmic side. A helical transmembrane segment spans residues 93–111 (VLRAVMYIIAQCVGAIVAT). The Extracellular portion of the chain corresponds to 112 to 135 (AILSGITSSLPGNSLGLNSLAPGV). A helical membrane pass occupies residues 136 to 155 (DSGQGLGIEIIGTLQLVLCV). At 156 to 165 (LATTDRRRRD) the chain is on the cytoplasmic side. Residues 166 to 183 (LGGSAPLAIGFSVALGHL) traverse the membrane as a helical segment. At 184 to 188 (LAIDY) the chain is on the extracellular side. An intramembrane segment occupies 189–201 (TGCGINPARSFGS). Residues 194–196 (NPA) carry the NPA 2 motif. The Extracellular portion of the chain corresponds to 202–208 (AVITHNF). The helical transmembrane segment at 209 to 226 (QDHWVFWVGPFIGGALAV) threads the bilayer. The Cytoplasmic segment spans residues 227–271 (LIYDFILAPRSSDLTDRVKVWTSGQVEEYDLDGDDINSRVEMKPK). Residue S249 is modified to Phosphoserine. Phosphotyrosine is present on Y255. Position 264 is a phosphoserine (S264).

This sequence belongs to the MIP/aquaporin (TC 1.A.8) family. Homotetramer; each monomer provides an independent water pore. Component of the ankyrin-1 complex in the erythrocyte, composed of ANK1, RHCE, RHAG, SLC4A1, EPB42, GYPA, GYPB and AQP1. Interacts with EPHB2; involved in endolymph production in the inner ear. Identified in a complex with STOM. Interacts (via the N-terminal) with ANK1 (via ANK 1-5 repeats). Interacts (via the C-terminal) with EPB42.

The protein resides in the cell membrane. It carries out the reaction H2O(in) = H2O(out). It catalyses the reaction nitric oxide(out) = nitric oxide(in). The enzyme catalyses CO2(out) = CO2(in). The catalysed reaction is glycerol(in) = glycerol(out). It carries out the reaction H2O2(out) = H2O2(in). It catalyses the reaction K(+)(in) = K(+)(out). The enzyme catalyses Na(+)(in) = Na(+)(out). Functionally, forms a water channel that facilitates the transport of water across cell membranes, playing a crucial role in water homeostasis in various tissues. Could also be permeable to small solutes including hydrogen peroxide, glycerol and gases such as amonnia (NH3), nitric oxide (NO) and carbon dioxide (CO2). Recruited to the ankyrin-1 complex, a multiprotein complex of the erythrocyte membrane, it could be part of a CO2 metabolon, linking facilitated diffusion of CO2 across the membrane, anion exchange of Cl(-)/HCO3(-) and interconversion of dissolved CO2 and carbonic acid in the cytosol. In vitro, it shows non-selective gated cation channel activity and may be permeable to cations like K(+) and Na(+) in vivo. In Sus scrofa (Pig), this protein is Aquaporin-1.